The primary structure comprises 520 residues: Amine oxidase [flavin-containing] B (520 aa).

At Ser2 the chain carries N-acetylserine. The Cytoplasmic segment spans residues 2–489; sequence SGKCDVVVVG…TFLERHLPSV (488 aa). The residue at position 52 (Lys52) is an N6-acetyllysine. Position 397 is an S-8alpha-FAD cysteine (Cys397). Residues 490 to 516 form a helical; Anchor for type IV membrane protein membrane-spanning segment; sequence PGLLRLIGLTAIFSATALGVLAHKRGL. The Mitochondrial intermembrane segment spans residues 517-520; the sequence is LVRV.

It belongs to the flavin monoamine oxidase family. Monomer, homo- or heterodimer (containing two subunits of similar size). Each subunit contains a covalently bound flavin. Enzymatically active as monomer. Requires FAD as cofactor.

Its subcellular location is the mitochondrion outer membrane. The enzyme catalyses a secondary aliphatic amine + O2 + H2O = a primary amine + an aldehyde + H2O2. It carries out the reaction (R)-adrenaline + O2 + H2O = (R)-3,4-dihydroxymandelaldehyde + methylamine + H2O2. The catalysed reaction is a primary methyl amine + O2 + H2O = an aldehyde + H2O2 + NH4(+). It catalyses the reaction benzylamine + O2 + H2O = benzaldehyde + H2O2 + NH4(+). The enzyme catalyses dopamine + O2 + H2O = 3,4-dihydroxyphenylacetaldehyde + H2O2 + NH4(+). It carries out the reaction tyramine + O2 + H2O = (4-hydroxyphenyl)acetaldehyde + H2O2 + NH4(+). The catalysed reaction is (R)-noradrenaline + O2 + H2O = (R)-3,4-dihydroxymandelaldehyde + H2O2 + NH4(+). It catalyses the reaction 2-phenylethylamine + O2 + H2O = 2-phenylacetaldehyde + H2O2 + NH4(+). The enzyme catalyses N-acetylputrescine + O2 + H2O = 4-acetamidobutanal + H2O2 + NH4(+). In terms of biological role, catalyzes the oxidative deamination of primary and some secondary amines such as neurotransmitters, and exogenous amines including the tertiary amine, neurotoxin 1-methyl-4-phenyl-1,2,3,6-tetrahydropyridine (MPTP), with concomitant reduction of oxygen to hydrogen peroxide and participates in the metabolism of neuroactive and vasoactive amines in the central nervous system and peripheral tissues. Preferentially degrades benzylamine and phenylethylamine. The chain is Amine oxidase [flavin-containing] B from Canis lupus familiaris (Dog).